The primary structure comprises 572 residues: Urease subunit alpha (572 aa).

The 437-residue stretch at 136 to 572 (GGIDTHIHWI…VPLAQRYFLF (437 aa)) folds into the Urease domain. Ni(2+) contacts are provided by His141, His143, and Lys224. Lys224 bears the N6-carboxylysine mark. Position 226 (His226) interacts with substrate. The Ni(2+) site is built by His253 and His279. Catalysis depends on His327, which acts as the Proton donor. Asp367 provides a ligand contact to Ni(2+).

Belongs to the metallo-dependent hydrolases superfamily. Urease alpha subunit family. In terms of assembly, heterotrimer of UreA (gamma), UreB (beta) and UreC (alpha) subunits. Three heterotrimers associate to form the active enzyme. The cofactor is Ni cation. In terms of processing, carboxylation allows a single lysine to coordinate two nickel ions.

Its subcellular location is the cytoplasm. The catalysed reaction is urea + 2 H2O + H(+) = hydrogencarbonate + 2 NH4(+). Its pathway is nitrogen metabolism; urea degradation; CO(2) and NH(3) from urea (urease route): step 1/1. The protein is Urease subunit alpha of Actinobacillus pleuropneumoniae (Haemophilus pleuropneumoniae).